Reading from the N-terminus, the 370-residue chain is Sphingosine 1-phosphate receptor 2 (370 aa).

Residues 1 to 57 (MTTCRLFAGFCQAVTMSKYSQYFNKTLIQVHYLTAKEMTAEELRDRIESKQSLSSLN) are Extracellular-facing. N-linked (GlcNAc...) asparagine glycosylation is present at N24. The chain crosses the membrane as a helical span at residues 58 to 78 (ILFVVICSIIILENLLVLIAV). Topologically, residues 79 to 87 (FRNKKFHSA) are cytoplasmic. Residues 88–108 (MFFFIGNLAFSDLLAGSAYIA) form a helical membrane-spanning segment. Residues 109-128 (NIFLSGPRTFHLTPVQWFIR) lie on the Extracellular side of the membrane. The chain crosses the membrane as a helical span at residues 129-149 (EGTAFIALSASVFSLLAIAIE). At 150 to 167 (RYIAITKVKVYGSNKTCR) the chain is on the cytoplasmic side. A helical transmembrane segment spans residues 168-193 (MFLLIGACWVMSILLGGLPIIGWNCI). The Extracellular segment spans residues 194 to 219 (NNLDDCSAVLPLNTRYYIRFVVTIFS). Residues 220-230 (IILLSIVILYV) traverse the membrane as a helical segment. At 231 to 254 (RIYLIVRTSHQEATNSPAYALLKT) the chain is on the cytoplasmic side. Residues 255–275 (VTIVLGVFIICWLPAFTILLL) traverse the membrane as a helical segment. Residues 276–289 (DTSCKMKQCPILNN) are Extracellular-facing. Residues 290–310 (AGIFFSFATLNSALNPLIYTL) traverse the membrane as a helical segment. The Cytoplasmic segment spans residues 311-370 (RSKDMRKEFLRVLCCWGLLNCGRPPHRCMVPLKSSSSMEHCTNKHEHQSIPIMQDCTTCV). C325 carries S-palmitoyl cysteine lipidation.

Belongs to the G-protein coupled receptor 1 family.

The protein localises to the cell membrane. Receptor for the lysosphingolipid sphingosine 1-phosphate (S1P). S1P receptor is critical for cell migration and epithelial integrity during vertebrate embryogenesis. Receptor for the chemokine-like protein FAM19A5. Mediates the inhibitory effect of FAM19A5 on vascular smooth muscle cell proliferation and migration. This Danio rerio (Zebrafish) protein is Sphingosine 1-phosphate receptor 2 (s1pr2).